The chain runs to 678 residues: Elongation factor G 2 (678 aa).

The region spanning 4–278 (QKLRNIGIIA…AVVDYLPSPQ (275 aa)) is the tr-type G domain. Residues 13–20 (AHVDAGKT), 77–81 (DTPGH), and 131–134 (NKMD) contribute to the GTP site.

It belongs to the TRAFAC class translation factor GTPase superfamily. Classic translation factor GTPase family. EF-G/EF-2 subfamily.

Its subcellular location is the cytoplasm. Functionally, catalyzes the GTP-dependent ribosomal translocation step during translation elongation. During this step, the ribosome changes from the pre-translocational (PRE) to the post-translocational (POST) state as the newly formed A-site-bound peptidyl-tRNA and P-site-bound deacylated tRNA move to the P and E sites, respectively. Catalyzes the coordinated movement of the two tRNA molecules, the mRNA and conformational changes in the ribosome. The sequence is that of Elongation factor G 2 from Hahella chejuensis (strain KCTC 2396).